A 462-amino-acid polypeptide reads, in one-letter code: MVEEGANKTVGAPTVGDDQQPKEFVRPPFTPFQDILDAFNYLMWNPEANAIAMPVLILLESIAMKFIQNKVSYTEIDYTAYMEQIWMIQNGERDYSQIKGGTGPLVYPAGHVFIYKIFEWVSDGLENISEAQDLFRYLYVITLMIQFMCFGLLNIPPGYAIFAILSKRLHSVYVLRLFNDCFTTLFMSLAVLVMILCAKYKIRGFLVLIGSSFYSMAVSIKMNALLYLPGVLLTIYLLERCNTFKIVLNLAVMVIWQVIIAIPFWKEYPWEYLQSAFNFSRQFMYKWSVNWQMVDEEVFLDPLFHRSLLISHVIVLVVFLFYKLIPTNMNTPAGLLKIGKANLLHPFTDAVFSAMRVNAEQIAYILLVTNYIGVLFARSLHYQFLSWYHWTLPVLLNWANVPYPLCVLWYLTHEWCWNSYPPNATASTLLHACNTSLLLAVFLRGPANSKSGDNETTHEKAE.

The disordered stretch occupies residues 1–21 (MVEEGANKTVGAPTVGDDQQP). Residues 1-144 (MVEEGANKTV…FRYLYVITLM (144 aa)) lie on the Lumenal side of the membrane. The chain crosses the membrane as a helical span at residues 145 to 165 (IQFMCFGLLNIPPGYAIFAIL). At 166 to 176 (SKRLHSVYVLR) the chain is on the cytoplasmic side. A helical transmembrane segment spans residues 177–197 (LFNDCFTTLFMSLAVLVMILC). Over 198–217 (AKYKIRGFLVLIGSSFYSMA) the chain is Lumenal. The helical transmembrane segment at 218–238 (VSIKMNALLYLPGVLLTIYLL) threads the bilayer. Topologically, residues 239 to 243 (ERCNT) are cytoplasmic. Residues 244-264 (FKIVLNLAVMVIWQVIIAIPF) form a helical membrane-spanning segment. The Lumenal segment spans residues 265–306 (WKEYPWEYLQSAFNFSRQFMYKWSVNWQMVDEEVFLDPLFHR). The chain crosses the membrane as a helical span at residues 307 to 327 (SLLISHVIVLVVFLFYKLIPT). Residues 328-356 (NMNTPAGLLKIGKANLLHPFTDAVFSAMR) are Cytoplasmic-facing. A helical membrane pass occupies residues 357–377 (VNAEQIAYILLVTNYIGVLFA). Topologically, residues 378–390 (RSLHYQFLSWYHW) are lumenal. The chain crosses the membrane as a helical span at residues 391-411 (TLPVLLNWANVPYPLCVLWYL). The Cytoplasmic segment spans residues 412-462 (THEWCWNSYPPNATASTLLHACNTSLLLAVFLRGPANSKSGDNETTHEKAE).

Belongs to the glycosyltransferase ALG3 family.

It is found in the endoplasmic reticulum membrane. It carries out the reaction an alpha-D-Man-(1-&gt;2)-alpha-D-Man-(1-&gt;2)-alpha-D-Man-(1-&gt;3)-[alpha-D-Man-(1-&gt;6)]-beta-D-Man-(1-&gt;4)-beta-D-GlcNAc-(1-&gt;4)-alpha-D-GlcNAc-diphospho-di-trans,poly-cis-dolichol + a di-trans,poly-cis-dolichyl beta-D-mannosyl phosphate = an alpha-D-Man-(1-&gt;2)-alpha-D-Man-(1-&gt;2)-alpha-D-Man-(1-&gt;3)-[alpha-D-Man-(1-&gt;3)-alpha-D-Man-(1-&gt;6)]-beta-D-Man-(1-&gt;4)-beta-D-GlcNAc-(1-&gt;4)-alpha-D-GlcNAc-diphospho-di-trans,poly-cis-dolichol + a di-trans,poly-cis-dolichyl phosphate + H(+). Its pathway is protein modification; protein glycosylation. Its function is as follows. Dol-P-Man:Man(5)GlcNAc(2)-PP-Dol alpha-1,3-mannosyltransferase that operates in the biosynthetic pathway of dolichol-linked oligosaccharides, the glycan precursors employed in protein asparagine (N)-glycosylation. The assembly of dolichol-linked oligosaccharides begins on the cytosolic side of the endoplasmic reticulum membrane and finishes in its lumen. The sequential addition of sugars to dolichol pyrophosphate produces dolichol-linked oligosaccharides containing fourteen sugars, including two GlcNAcs, nine mannoses and three glucoses. Once assembled, the oligosaccharide is transferred from the lipid to nascent proteins by oligosaccharyltransferases. In the lumen of the endoplasmic reticulum, adds the first dolichyl beta-D-mannosyl phosphate derived mannose in an alpha-1,3 linkage to Man(5)GlcNAc(2)-PP-dolichol to produce Man(6)GlcNAc(2)-PP-dolichol. This chain is Dol-P-Man:Man(5)GlcNAc(2)-PP-Dol alpha-1,3-mannosyltransferase (ALG3), found in Kluyveromyces lactis (strain ATCC 8585 / CBS 2359 / DSM 70799 / NBRC 1267 / NRRL Y-1140 / WM37) (Yeast).